Here is a 518-residue protein sequence, read N- to C-terminus: MKLRNTGQMAFRSPFSNLHVRRSSHKPSHPAFVRQNRSMHYYFRDALNIGAFGIIFGLPCLLYAFTFFCNDISGCPAPSLLHPSTLSIDKLEQEVGWPEDGIKALYDTQVTMWVLSYYLLSLLMQVFLPGTEVEGTELACGGRLKYKFNAFLSAVLILSGCAVGTYLYGTEFALWTFLWDNYVQVITANLIICTAIAIFVYLRSFSVPAPGQLNPELRQLAPGGHTGNVLYDFFIGRELNPRIKLPIPFVGETARTIDIKVWCEMRPGLLGWIILDLSNIAHQYRTYGYITDSIVLTTAFQAFYVLDALYMEPALLTTMDVIMDGFGFMLSFGDMVWVPFLYNFQTRYLSVYPSELGLSGILIVLAVTAAGYVIFRGANNQKNRFRTDPNDPRVKHLKYIETKTGSKLLISGWWGCARHINYLGDWIMSWSYCLPTGVAGYAIIESINPASGEMQKQAVQTPESRGWGMIFTYFYMIYFGVLLLHRERRDEEKCKRKYGADWNRYTSLVRSRIIPGIY.

The N-linked (GlcNAc...) asparagine glycan is linked to asparagine 36. Transmembrane regions (helical) follow at residues 110–130 (VTMW…FLPG), 150–170 (AFLS…LYGT), 182–202 (YVQV…FVYL), 294–314 (IVLT…MEPA), 321–341 (VIMD…VPFL), and 355–375 (ELGL…YVIF). NADP(+) is bound by residues lysine 382, arginine 386, leucine 409, tryptophan 414, and 421 to 422 (NY). A helical membrane pass occupies residues 464–484 (SRGWGMIFTYFYMIYFGVLLL). Residues aspartate 490, 494 to 498 (CKRKY), and tyrosine 505 contribute to the NADP(+) site.

It belongs to the ERG4/ERG24 family.

It localises to the endoplasmic reticulum membrane. The protein operates within steroid metabolism; ergosterol biosynthesis. Its function is as follows. Delta(14)-sterol reductase; part of the third module of ergosterol biosynthesis pathway that includes the late steps of the pathway. Catalyzes the reduction of the C14=C15 double bond within 4,4,24-trimethyl ergosta-8,14,24(28)-trienolto produce 4,4-dimethylfecosterol. The third module or late pathway involves the ergosterol synthesis itself through consecutive reactions that mainly occur in the endoplasmic reticulum (ER) membrane. Firstly, the squalene synthase erg9 catalyzes the condensation of 2 farnesyl pyrophosphate moieties to form squalene, which is the precursor of all steroids. Squalene synthase is crucial for balancing the incorporation of farnesyl diphosphate (FPP) into sterol and nonsterol isoprene synthesis. Secondly, squalene is converted into lanosterol by the consecutive action of the squalene epoxidase erg1 and the lanosterol synthase erg7. Then, the delta(24)-sterol C-methyltransferase erg6 methylates lanosterol at C-24 to produce eburicol. Eburicol is the substrate of the sterol 14-alpha demethylase encoded by cyp51A and cyp51B, to yield 4,4,24-trimethyl ergosta-8,14,24(28)-trienol. The C-14 reductase erg24 then reduces the C14=C15 double bond which leads to 4,4-dimethylfecosterol. A sequence of further demethylations at C-4, involving the C-4 demethylation complex containing the C-4 methylsterol oxidases erg25A or erg25B, the sterol-4-alpha-carboxylate 3-dehydrogenase erg26 and the 3-keto-steroid reductase erg27, leads to the production of fecosterol via 4-methylfecosterol. The C-8 sterol isomerase erg2 then catalyzes the reaction which results in unsaturation at C-7 in the B ring of sterols and thus converts fecosterol to episterol. The sterol-C5-desaturase erg3B then catalyzes the introduction of a C-5 double bond in the B ring to produce 5-dehydroepisterol. The 2 other sterol-C5-desaturases, erg3A and erg3C, seem to be less important in ergosterol biosynthesis. The C-22 sterol desaturase erg5 further converts 5-dehydroepisterol into ergosta-5,7,22,24(28)-tetraen-3beta-ol by forming the C-22(23) double bond in the sterol side chain. Finally, ergosta-5,7,22,24(28)-tetraen-3beta-ol is substrate of the C-24(28) sterol reductases erg4A and erg4B to produce ergosterol. Possible alternative sterol biosynthetic pathways might exist from fecosterol to ergosterol, depending on the activities of the erg3 isoforms. This chain is Delta(14)-sterol reductase erg24B, found in Aspergillus fumigatus (strain ATCC MYA-4609 / CBS 101355 / FGSC A1100 / Af293) (Neosartorya fumigata).